A 382-amino-acid polypeptide reads, in one-letter code: Succinate--CoA ligase [ADP-forming] subunit beta (382 aa).

Residues 9 to 240 (KELFAKYGVK…PRDITEFEAY (232 aa)) form the ATP-grasp domain. ATP is bound by residues K45, 52 to 54 (GRG), L94, and E99. N193 and D207 together coordinate Mg(2+). Substrate-binding positions include N260 and 317-319 (GIT).

Belongs to the succinate/malate CoA ligase beta subunit family. As to quaternary structure, heterotetramer of two alpha and two beta subunits. Requires Mg(2+) as cofactor.

It catalyses the reaction succinate + ATP + CoA = succinyl-CoA + ADP + phosphate. It carries out the reaction GTP + succinate + CoA = succinyl-CoA + GDP + phosphate. Its pathway is carbohydrate metabolism; tricarboxylic acid cycle; succinate from succinyl-CoA (ligase route): step 1/1. Functionally, succinyl-CoA synthetase functions in the citric acid cycle (TCA), coupling the hydrolysis of succinyl-CoA to the synthesis of either ATP or GTP and thus represents the only step of substrate-level phosphorylation in the TCA. The beta subunit provides nucleotide specificity of the enzyme and binds the substrate succinate, while the binding sites for coenzyme A and phosphate are found in the alpha subunit. The polypeptide is Succinate--CoA ligase [ADP-forming] subunit beta (Pyrobaculum calidifontis (strain DSM 21063 / JCM 11548 / VA1)).